A 257-amino-acid polypeptide reads, in one-letter code: MDATQPTLVAEDVHKNFGTLEILKGISLTANKGDVVSIIGSSGSGKSTFLRCMNFLETPNKGRIAVGQEEVVVKTDAAGRLIGVDRKKIERMRMQLGMVFQSFNLWGHMTVLQNVMEGPLHVLKQPKGEVRDRAMDFLDKVGIANKHAAYPSQLSGGQQQRVSIARALAMQPSALLFDEPTSALDPELVGEVLKVIRKLAEEGRTMVVVTHEMGFARDVSSKVLFLEKGQIEEQGTPQEVFQNPTSPRCRAFLSSVL.

In terms of domain architecture, ABC transporter spans 8 to 253 (LVAEDVHKNF…PTSPRCRAFL (246 aa)). 40–47 (GSSGSGKS) contributes to the ATP binding site.

The protein belongs to the ABC transporter superfamily.

Its subcellular location is the cell inner membrane. In terms of biological role, component of the nopaline active transport system probably consisting of four subunits: Q, M, P and T. This system is also capable of transporting octopine provided that catabolic functions are induced with nopaline. In Agrobacterium fabrum (strain C58 / ATCC 33970) (Agrobacterium tumefaciens (strain C58)), this protein is Nopaline permease ATP-binding protein P (nocP).